The sequence spans 206 residues: MIDFDGYRPNVGIVICNKAGQVLWAKRFGQNSWQFPQGGINEGENIETAMYRELYEEVGLTKKDVRLLWASKYWLKYKLPKRLVRSDGSQPVCIGQKQRWFLLQLLSDENLIDLKTTKSPEFDGWRWVSFWYPVRQVVSFKRDVYRKVMKEFAGVLLNESKKPETVEKPRVERTEKRDFQKRDNQKREFRKSARMWNNSHQKGKAQ.

One can recognise a Nudix hydrolase domain in the interval 6–150 (GYRPNVGIVI…KRDVYRKVMK (145 aa)). A Nudix box motif is present at residues 38–59 (GGINEGENIETAMYRELYEEVG). Residues 162-191 (KPETVEKPRVERTEKRDFQKRDNQKREFRK) show a composition bias toward basic and acidic residues. The interval 162–206 (KPETVEKPRVERTEKRDFQKRDNQKREFRKSARMWNNSHQKGKAQ) is disordered.

This sequence belongs to the Nudix hydrolase family. RppH subfamily. It depends on a divalent metal cation as a cofactor.

Its function is as follows. Accelerates the degradation of transcripts by removing pyrophosphate from the 5'-end of triphosphorylated RNA, leading to a more labile monophosphorylated state that can stimulate subsequent ribonuclease cleavage. This chain is RNA pyrophosphohydrolase, found in Actinobacillus pleuropneumoniae serotype 7 (strain AP76).